Reading from the N-terminus, the 84-residue chain is Sulfur carrier protein TusA (84 aa).

Catalysis depends on Cys21, which acts as the Cysteine persulfide intermediate.

The protein belongs to the sulfur carrier protein TusA family.

The protein resides in the cytoplasm. In terms of biological role, sulfur carrier protein which probably makes part of a sulfur-relay system. The sequence is that of Sulfur carrier protein TusA from Pseudomonas savastanoi pv. phaseolicola (strain 1448A / Race 6) (Pseudomonas syringae pv. phaseolicola (strain 1448A / Race 6)).